Here is a 385-residue protein sequence, read N- to C-terminus: Probable tRNA sulfurtransferase (385 aa).

The 105-residue stretch at 57 to 161 (NESIKRLSNV…NKNAYVWSNK (105 aa)) folds into the THUMP domain. ATP is bound by residues 181–182 (ML), 206–207 (YY), R263, G285, and Q294.

The protein belongs to the ThiI family.

It localises to the cytoplasm. It carries out the reaction [ThiI sulfur-carrier protein]-S-sulfanyl-L-cysteine + a uridine in tRNA + 2 reduced [2Fe-2S]-[ferredoxin] + ATP + H(+) = [ThiI sulfur-carrier protein]-L-cysteine + a 4-thiouridine in tRNA + 2 oxidized [2Fe-2S]-[ferredoxin] + AMP + diphosphate. The catalysed reaction is [ThiS sulfur-carrier protein]-C-terminal Gly-Gly-AMP + S-sulfanyl-L-cysteinyl-[cysteine desulfurase] + AH2 = [ThiS sulfur-carrier protein]-C-terminal-Gly-aminoethanethioate + L-cysteinyl-[cysteine desulfurase] + A + AMP + 2 H(+). It participates in cofactor biosynthesis; thiamine diphosphate biosynthesis. In terms of biological role, catalyzes the ATP-dependent transfer of a sulfur to tRNA to produce 4-thiouridine in position 8 of tRNAs, which functions as a near-UV photosensor. Also catalyzes the transfer of sulfur to the sulfur carrier protein ThiS, forming ThiS-thiocarboxylate. This is a step in the synthesis of thiazole, in the thiamine biosynthesis pathway. The sulfur is donated as persulfide by IscS. In Clostridium botulinum (strain Alaska E43 / Type E3), this protein is Probable tRNA sulfurtransferase.